The chain runs to 1040 residues: Multidrug resistance protein MdtB (1040 aa).

Transmembrane regions (helical) follow at residues 16 to 36 (FIMR…AGII), 347 to 367 (LMMA…NIPA), 369 to 389 (IIPG…MVFL), 396 to 416 (LTLM…IVVI), 440 to 460 (IGFT…PLLF), 472 to 492 (FAIT…TLTP), 537 to 557 (WLTL…WVFI), 863 to 883 (LGST…VLGI), 888 to 908 (FIHP…ALLA), 911 to 931 (IAGS…IGIV), 968 to 988 (ILMT…STGV), and 998 to 1018 (IGMV…TPVI).

This sequence belongs to the resistance-nodulation-cell division (RND) (TC 2.A.6) family. MdtB subfamily. In terms of assembly, part of a tripartite efflux system composed of MdtA, MdtB and MdtC. MdtB forms a heteromultimer with MdtC.

It localises to the cell inner membrane. In terms of biological role, the MdtABC tripartite complex confers resistance against novobiocin and deoxycholate. The protein is Multidrug resistance protein MdtB of Escherichia coli O9:H4 (strain HS).